Consider the following 178-residue polypeptide: ATP synthase subunit delta (178 aa).

This sequence belongs to the ATPase delta chain family. In terms of assembly, F-type ATPases have 2 components, F(1) - the catalytic core - and F(0) - the membrane proton channel. F(1) has five subunits: alpha(3), beta(3), gamma(1), delta(1), epsilon(1). F(0) has three main subunits: a(1), b(2) and c(10-14). The alpha and beta chains form an alternating ring which encloses part of the gamma chain. F(1) is attached to F(0) by a central stalk formed by the gamma and epsilon chains, while a peripheral stalk is formed by the delta and b chains.

The protein resides in the cell membrane. Functionally, f(1)F(0) ATP synthase produces ATP from ADP in the presence of a proton or sodium gradient. F-type ATPases consist of two structural domains, F(1) containing the extramembraneous catalytic core and F(0) containing the membrane proton channel, linked together by a central stalk and a peripheral stalk. During catalysis, ATP synthesis in the catalytic domain of F(1) is coupled via a rotary mechanism of the central stalk subunits to proton translocation. In terms of biological role, this protein is part of the stalk that links CF(0) to CF(1). It either transmits conformational changes from CF(0) to CF(1) or is implicated in proton conduction. The polypeptide is ATP synthase subunit delta (Streptococcus pyogenes serotype M3 (strain ATCC BAA-595 / MGAS315)).